A 446-amino-acid polypeptide reads, in one-letter code: N-succinylarginine dihydrolase (446 aa).

Substrate contacts are provided by residues 19–28, asparagine 110, and 137–138; these read AGLSFGNEAS and HR. Glutamate 174 is an active-site residue. Residue arginine 213 coordinates substrate. Histidine 249 is a catalytic residue. Substrate-binding residues include aspartate 251 and asparagine 364. Cysteine 370 (nucleophile) is an active-site residue.

The protein belongs to the succinylarginine dihydrolase family. As to quaternary structure, homodimer.

The catalysed reaction is N(2)-succinyl-L-arginine + 2 H2O + 2 H(+) = N(2)-succinyl-L-ornithine + 2 NH4(+) + CO2. It participates in amino-acid degradation; L-arginine degradation via AST pathway; L-glutamate and succinate from L-arginine: step 2/5. Functionally, catalyzes the hydrolysis of N(2)-succinylarginine into N(2)-succinylornithine, ammonia and CO(2). In Serratia proteamaculans (strain 568), this protein is N-succinylarginine dihydrolase.